Consider the following 1038-residue polypeptide: TonB-dependent receptor P39 (1038 aa).

A signal peptide spans 1-39 (MFKQKLKMKPKIKRNCTFSGLAFILMLLFSSFTVNNLNA). Residues 120–127 (DEVVVIGY) carry the TonB box motif. One can recognise a TBDR plug domain in the interval 131-243 (KRADVIGAVG…ANGVVLITTK (113 aa)). Residues 249-1038 (FPKMTVDYIS…EIVIGLNVEF (790 aa)) enclose the TBDR beta-barrel domain. Residues 1021-1038 (SLRYPNQTEIVIGLNVEF) carry the TonB C-terminal box motif.

It belongs to the TonB-dependent receptor family.

It is found in the cell outer membrane. In terms of biological role, tonB-dependent receptor probably involved in ulvan degradation. Ulvan is the main polysaccharide component of the Ulvales (green seaweed) cell wall. It is composed of disaccharide building blocks comprising 3-sulfated rhamnose (Rha3S) linked to D-glucuronic acid (GlcA), L-iduronic acid (IduA), or D-xylose (Xyl). The TonB-dependent receptor may mediate transport of ulvan oligosaccharides from the surface of the outer membrane to the periplasm for subsequent degradation. In Formosa agariphila (strain DSM 15362 / KCTC 12365 / LMG 23005 / KMM 3901 / M-2Alg 35-1), this protein is TonB-dependent receptor P39.